The primary structure comprises 30 residues: Cysteine-rich venom protein okinavin (30 aa).

Residues 1-30 (SVDFDSESPRKPXIQNEIVDLHNPLRRXVN) form a disordered region.

It belongs to the CRISP family. In terms of processing, contains 8 disulfide bonds. As to expression, expressed by the venom gland.

It is found in the secreted. Inhibits calcium-activated potassium channels (KCa), voltage-gated potassium channel (Kv), and the calcium release channel/ryanodine receptor (RyR). In Ovophis okinavensis (Ryukyu Island pit viper), this protein is Cysteine-rich venom protein okinavin.